Here is a 541-residue protein sequence, read N- to C-terminus: ATP synthase subunit beta (541 aa).

Positions 1–65 (MAKAVTSSKG…TPVKKEERAK (65 aa)) are disordered. 2 stretches are compositionally biased toward basic and acidic residues: residues 25–36 (VKKDASKSKDAS) and 52–65 (AAKD…ERAK). 214 to 221 (GGAGVGKT) serves as a coordination point for ATP.

The protein belongs to the ATPase alpha/beta chains family. As to quaternary structure, F-type ATPases have 2 components, CF(1) - the catalytic core - and CF(0) - the membrane proton channel. CF(1) has five subunits: alpha(3), beta(3), gamma(1), delta(1), epsilon(1). CF(0) has three main subunits: a(1), b(2) and c(9-12). The alpha and beta chains form an alternating ring which encloses part of the gamma chain. CF(1) is attached to CF(0) by a central stalk formed by the gamma and epsilon chains, while a peripheral stalk is formed by the delta and b chains.

Its subcellular location is the cell inner membrane. It carries out the reaction ATP + H2O + 4 H(+)(in) = ADP + phosphate + 5 H(+)(out). Produces ATP from ADP in the presence of a proton gradient across the membrane. The catalytic sites are hosted primarily by the beta subunits. This chain is ATP synthase subunit beta, found in Bartonella tribocorum (strain CIP 105476 / IBS 506).